The following is a 1997-amino-acid chain: Chromatin-remodeling ATPase INO80 (1997 aa).

Disordered stretches follow at residues 1-378, 397-579, and 674-858; these read MDHF…AAPS, IAAP…AENE, and ERKK…EKVV. Residues 12–25 show a composition bias toward basic and acidic residues; sequence PHFDEDGTEGRGDR. Residues 32-41 are compositionally biased toward pro residues; sequence GPAPPPPPPR. A compositionally biased stretch (low complexity) spans 49–64; sequence NPVSSNSAVQSQAAAA. A compositionally biased stretch (polar residues) spans 89–107; sequence STNSMRATPHSSSSFNLRS. Basic and acidic residues predominate over residues 108 to 117; sequence PTREPSEYRH. 3 stretches are compositionally biased toward low complexity: residues 118–156, 203–230, and 240–251; these read PLSS…SLSS, SLQA…PLSA, and SSSSQPPARASQ. Residues 264-276 show a composition bias toward basic and acidic residues; sequence SFRDRDSSVREKS. Positions 288-297 are enriched in polar residues; sequence EASNGISGSS. A compositionally biased stretch (basic and acidic residues) spans 298-317; the sequence is PRKDRDRDRDHRGTTRESQR. Composition is skewed to polar residues over residues 318-340 and 366-378; these read RSVS…SASN and VDNT…AAPS. Over residues 411 to 420 the composition is skewed to low complexity; it reads SPRLSLRPPS. Polar residues-rich tracts occupy residues 433–442, 451–465, and 472–481; these read NPTNGTTSTA, SPPS…TNPS, and SFSNILSSSE. 2 stretches are compositionally biased toward basic and acidic residues: residues 500–519 and 529–540; these read VPMK…EKKE and RISDIRHSESTP. Residues 666–735 adopt a coiled-coil conformation; the sequence is ERELFAEKER…VQQTRLILQK (70 aa). Positions 689–707 are enriched in low complexity; it reads MATTMEAKAAALARASAAQ. A compositionally biased stretch (basic and acidic residues) spans 709–723; it reads EAERQKYMREAERAN. Residues 769–781 show a composition bias toward basic residues; sequence TKGKGRAGARPKK. The segment covering 782–793 has biased composition (basic and acidic residues); that stretch reads SKEQKQAEKDAA. Low complexity predominate over residues 794–806; the sequence is EAAQAALDAGLEL. Positions 824–858 are enriched in basic and acidic residues; it reads APKEADVDKDKENKEPQEPKEPKEPKEKVIKEKVV. Positions 881-1006 constitute a DBINO domain; that stretch reads IWRDLARKDV…SHFIGKKIKT (126 aa). In terms of domain architecture, Helicase ATP-binding spans 1130–1302; the sequence is VNLYEQGING…WALLHFIMPS (173 aa). Residue 1143–1150 participates in ATP binding; the sequence is DEMGLGKT. A DEAQ box motif is present at residues 1253–1256; that stretch reads DEAQ. One can recognise a Helicase C-terminal domain in the interval 1702-1858; that stretch reads KLDELLRELK…GSSAAGGGVD (157 aa). Over residues 1891-1902 the composition is skewed to basic and acidic residues; it reads ELLESGELDKMQ. A disordered region spans residues 1891–1986; that stretch reads ELLESGELDK…GSKKAKTTKQ (96 aa). Basic residues predominate over residues 1903-1914; sequence KKSRGGNKRKRG. Basic and acidic residues predominate over residues 1919–1933; the sequence is EGKEVSLDEMYHEGE. Gly residues predominate over residues 1954–1967; sequence AAGGEGGDGKGAVG. Over residues 1970 to 1985 the composition is skewed to basic residues; it reads AKKRKTGGSKKAKTTK.

The protein belongs to the SNF2/RAD54 helicase family. As to quaternary structure, component of the INO80 chromatin-remodeling complex.

It localises to the nucleus. It catalyses the reaction ATP + H2O = ADP + phosphate + H(+). Functionally, ATPase component of the INO80 complex which remodels chromatin by shifting nucleosomes and is involved in DNA repair. This chain is Chromatin-remodeling ATPase INO80 (crf2-1), found in Neurospora crassa (strain ATCC 24698 / 74-OR23-1A / CBS 708.71 / DSM 1257 / FGSC 987).